The following is a 467-amino-acid chain: MKNCEYQQIDPRALRTPSSRTSSTLPCGRKGSQRLRRKWEVFPGKNRFYCDGRIMLARQCGVLPLTIGLIFITSVLFFTFDCPFLVDHLTVFIPVIGGVLFIFVVISLLQTSFTDPGILPRALPDEAADIEKQIDNSGSSTYRPPPRTKEILINDQVVKLKYCFTCKMFRPPRTSHCSLCDNCVERFDHHCPWVGNCVGKRNYRFFYAFIVSLSFLTSFIFGCVITHLTLRSQGGNGFIQAIQDSPASVVELVICFFSIWSILGLSGFHTYLVASNLTTNEDIKGSWSSKRGEESGNPYTYNNIFTNCCVVLCGPMPPSLIDRRGFVPPEDAPQTVTSDAELPAFMAKNDTNMCAQGTKELLESMANSTVIQSTCAPGKPKTAPVTQESLLNTVSITVSPPSKPPSNGCSGRQARRPIDVPCSQRGLKRAALHTHKPMLRLPSPLYSLSDSPLILSDAPDMGFIPLN.

Residues 1-59 are Cytoplasmic-facing; that stretch reads MKNCEYQQIDPRALRTPSSRTSSTLPCGRKGSQRLRRKWEVFPGKNRFYCDGRIMLARQ. Residues 60-80 traverse the membrane as a helical segment; the sequence is CGVLPLTIGLIFITSVLFFTF. Topologically, residues 81 to 88 are lumenal; sequence DCPFLVDH. Residues 89–109 traverse the membrane as a helical segment; sequence LTVFIPVIGGVLFIFVVISLL. Residues 110–204 lie on the Cytoplasmic side of the membrane; it reads QTSFTDPGIL…GNCVGKRNYR (95 aa). The 51-residue stretch at 161 to 211 folds into the DHHC domain; it reads KYCFTCKMFRPPRTSHCSLCDNCVERFDHHCPWVGNCVGKRNYRFFYAFIV. Catalysis depends on Cys-191, which acts as the S-palmitoyl cysteine intermediate. Residues 205-225 form a helical membrane-spanning segment; that stretch reads FFYAFIVSLSFLTSFIFGCVI. The Lumenal segment spans residues 226 to 247; sequence THLTLRSQGGNGFIQAIQDSPA. Residues 248 to 268 traverse the membrane as a helical segment; it reads SVVELVICFFSIWSILGLSGF. Topologically, residues 269 to 467 are cytoplasmic; the sequence is HTYLVASNLT…APDMGFIPLN (199 aa).

The protein belongs to the DHHC palmitoyltransferase family. ERF2/ZDHHC9 subfamily.

It localises to the golgi apparatus membrane. The enzyme catalyses L-cysteinyl-[protein] + hexadecanoyl-CoA = S-hexadecanoyl-L-cysteinyl-[protein] + CoA. Its function is as follows. Palmitoyltransferase that catalyzes the addition of palmitate onto various protein substrates, such as CGAS, HRAS and LCK. The sequence is that of Palmitoyltransferase ZDHHC18-A from Danio rerio (Zebrafish).